Consider the following 587-residue polypeptide: Hatching enzyme (587 aa).

The first 18 residues, 1-18 (MANSGLILLVMFMIHVTT), serve as a signal peptide directing secretion. Residues 19 to 166 (VHNVPLPSTA…PRCGVPDVLP (148 aa)) constitute a propeptide, activation peptide. N-linked (GlcNAc...) asparagine glycosylation is found at N64, N126, and N141. A Cysteine switch motif is present at residues 157–164 (PRCGVPDV). Zn(2+)-binding residues include C159 and H283. The active site involves E284. Zn(2+) contacts are provided by H287 and H293. Residues 325–382 (LYGSNSGSGTTTTTRRPTTTRATTTRRTTTTRATTTRATTTTTTSPSRPSPPRRACSG) are disordered. Residues 334 to 371 (TTTTTRRPTTTRATTTRRTTTTRATTTRATTTTTTSPS) are compositionally biased toward low complexity. An intrachain disulfide couples C380 to C582. Hemopexin repeat units follow at residues 381–422 (SGSF…RFGF), 425–468 (PQNI…WVGL), 469–513 (PCNI…FNDV), and 518–570 (HDGV…IPQC). N-linked (GlcNAc...) asparagine glycosylation occurs at N584.

Belongs to the peptidase M10A family. The cofactor is Zn(2+).

It catalyses the reaction Hydrolysis of proteins of the fertilization envelope and dimethylcasein.. In terms of biological role, allows the sea urchin to digest the protective envelope derived from the egg extracellular matrix; thus allowing the sea urchin to swim freely. In Paracentrotus lividus (Common sea urchin), this protein is Hatching enzyme.